The chain runs to 337 residues: UPF0284 protein AF_0276 (337 aa).

It belongs to the UPF0284 family.

The chain is UPF0284 protein AF_0276 from Archaeoglobus fulgidus (strain ATCC 49558 / DSM 4304 / JCM 9628 / NBRC 100126 / VC-16).